A 122-amino-acid chain; its full sequence is Large ribosomal subunit protein uL14 (122 aa).

Belongs to the universal ribosomal protein uL14 family. In terms of assembly, part of the 50S ribosomal subunit. Forms a cluster with proteins L3 and L19. In the 70S ribosome, L14 and L19 interact and together make contacts with the 16S rRNA in bridges B5 and B8.

Functionally, binds to 23S rRNA. Forms part of two intersubunit bridges in the 70S ribosome. The sequence is that of Large ribosomal subunit protein uL14 from Variovorax paradoxus (strain S110).